Consider the following 642-residue polypeptide: Dihydrolipoyllysine-residue acetyltransferase component of pyruvate dehydrogenase complex, mitochondrial (642 aa).

Residues 1-85 constitute a mitochondrion transit peptide; that stretch reads MWRVCARRAR…LLGSPSRRSY (85 aa). Residues 80–99 are disordered; it reads PSRRSYSLPPHQKVPLPSLS. 2 Lipoyl-binding domains span residues 90-166 and 217-293; these read HQKV…CITV and HMQI…CIIV. S99 is subject to Phosphoserine. Residues K131 and K258 each carry the N6-lipoyllysine modification. Positions 313–346 are disordered; it reads LKPQAAPPAPPPVAAVPPTPQPVAPTPSAAPAGP. Over residues 317–337 the composition is skewed to pro residues; that stretch reads AAPPAPPPVAAVPPTPQPVAP. The 38-residue stretch at 351–388 folds into the Peripheral subunit-binding (PSBD) domain; that stretch reads FVSPLAKKLAAEKGIDLTQVKGTGPEGRIIKKDIDSFV. R456 contributes to the CoA binding site. K461 carries the post-translational modification N6-acetyllysine. K468 carries the N6-succinyllysine modification. S470 provides a ligand contact to CoA. Position 542 is an N6-succinyllysine (K542). S561, N562, and G586 together coordinate CoA. Catalysis depends on residues H615 and D619.

Belongs to the 2-oxoacid dehydrogenase family. As to quaternary structure, part of the pyruvate dehydrogenase complex (PDHc) that is a multi-enzyme complex composed of multiple copies of three enzymes, pyruvate dehydrogenase (subunits PDH1A and PDHB, E1 component), dihydrolipoamide acetyltransferase (DLAT, E2 component), and dihydrolipoamide dehydrogenase (DLD, E3 component) to which is added an additional protein the E3-binding protein (PDHX, E3BP). In terms of structural architecture, the E2 and E3BP components assemble into a 60meric central core with icosahedral symmetry. The central core is decorated with E1 and E3 proteins. Currently, two alternative models for the E2:E3BP stoichiometry are considered as being either 48:12 (E2(48)-E3BP(12)) or 40:20 (E2(40)-E3BP(20)). Interacts with PDK2 and PDK3. Interacts with SIRT4. Interacts with PDHB. Requires (R)-lipoate as cofactor. Delipoylated at Lys-131 and Lys-258 by SIRT4, delipoylation decreases the PHD complex activity.

It localises to the mitochondrion matrix. It catalyses the reaction N(6)-[(R)-dihydrolipoyl]-L-lysyl-[protein] + acetyl-CoA = N(6)-[(R)-S(8)-acetyldihydrolipoyl]-L-lysyl-[protein] + CoA. In terms of biological role, as part of the pyruvate dehydrogenase complex, catalyzes the transfers of an acetyl group to a lipoic acid moiety. The pyruvate dehydrogenase complex, catalyzes the overall conversion of pyruvate to acetyl-CoA and CO(2), and thereby links cytoplasmic glycolysis and the mitochondrial tricarboxylic acid (TCA) cycle. The chain is Dihydrolipoyllysine-residue acetyltransferase component of pyruvate dehydrogenase complex, mitochondrial from Mus musculus (Mouse).